Reading from the N-terminus, the 405-residue chain is L-rhamnonate dehydratase (405 aa).

H33 and R59 together coordinate substrate. D226, E252, and E280 together coordinate Mg(2+). H329 functions as the Proton acceptor in the catalytic mechanism. Position 349 (E349) interacts with substrate.

This sequence belongs to the mandelate racemase/muconate lactonizing enzyme family. RhamD subfamily. As to quaternary structure, homooctamer; tetramer of dimers. The cofactor is Mg(2+).

It catalyses the reaction L-rhamnonate = 2-dehydro-3-deoxy-L-rhamnonate + H2O. In terms of biological role, catalyzes the dehydration of L-rhamnonate to 2-keto-3-deoxy-L-rhamnonate (KDR). The polypeptide is L-rhamnonate dehydratase (Escherichia coli O9:H4 (strain HS)).